We begin with the raw amino-acid sequence, 451 residues long: UPF0210 protein NMC1568 (451 aa).

The protein belongs to the UPF0210 family. Homodimer.

In Neisseria meningitidis serogroup C / serotype 2a (strain ATCC 700532 / DSM 15464 / FAM18), this protein is UPF0210 protein NMC1568.